Reading from the N-terminus, the 331-residue chain is Barley B recombinant-like protein D (331 aa).

The stretch at 43–101 (ALMNDRDNAIRERDHALAEKKAAIAERDMAFTQRDAAMAERNAAVVERDNALAALELAR) forms a coiled coil. Positions 51–86 (AIRERDHALAEKKAAIAERDMAFTQRDAAMAERNAA) are alanine-zipper. The segment covering 104–122 (GLNMNNGNGFPQGSLSGSK) has biased composition (polar residues). 2 disordered regions span residues 104-140 (GLNMNNGNGFPQGSLSGSKNIHHHDQLSHAQSSPLQL) and 156-205 (AYPI…VGMS).

This sequence belongs to the BBR/BPC family. As to quaternary structure, homodimer. Heterodimer.

The protein localises to the nucleus. Its function is as follows. Transcriptional regulator that specifically binds to GA-rich elements (GAGA-repeats) present in regulatory sequences of genes involved in developmental processes. The sequence is that of Barley B recombinant-like protein D from Oryza sativa subsp. japonica (Rice).